Consider the following 513-residue polypeptide: E3 ubiquitin-protein ligase XBAT33 (513 aa).

5 ANK repeats span residues 44–73, 77–106, 111–140, 171–200, and 214–244; these read GLNS…DVNS, CGQT…NVTR, AGRT…PSDK, GGIT…NVSA, and AGST…KMTL. Residues 312–362 form an RING-type zinc finger; it reads CAVCLERTCTVAAEGCEHQLCVRCALYLCSSSNVPSVTVGPPGSIPCPLCR. Disordered stretches follow at residues 397 to 417 and 455 to 483; these read DTTD…SKTR and HGTE…EEGQ. 2 stretches are compositionally biased toward basic and acidic residues: residues 455–466 and 474–483; these read HGTERHSEEHVE and TEQEKIEEGQ.

The catalysed reaction is S-ubiquitinyl-[E2 ubiquitin-conjugating enzyme]-L-cysteine + [acceptor protein]-L-lysine = [E2 ubiquitin-conjugating enzyme]-L-cysteine + N(6)-ubiquitinyl-[acceptor protein]-L-lysine.. It participates in protein modification; protein ubiquitination. Its function is as follows. Possesses E3 ubiquitin-protein ligase activity when associated with the E2 enzyme UBC8 in vitro. The polypeptide is E3 ubiquitin-protein ligase XBAT33 (XBAT33) (Arabidopsis thaliana (Mouse-ear cress)).